The primary structure comprises 123 residues: Large ribosomal subunit protein bL12 (123 aa).

The segment at 98-123 (KEGVSKEEAEEIKSKLEDAGATVELK) is disordered. A compositionally biased stretch (basic and acidic residues) spans 100 to 115 (GVSKEEAEEIKSKLED).

The protein belongs to the bacterial ribosomal protein bL12 family. Homodimer. Part of the ribosomal stalk of the 50S ribosomal subunit. Forms a multimeric L10(L12)X complex, where L10 forms an elongated spine to which 2 to 4 L12 dimers bind in a sequential fashion. Binds GTP-bound translation factors.

Functionally, forms part of the ribosomal stalk which helps the ribosome interact with GTP-bound translation factors. Is thus essential for accurate translation. The chain is Large ribosomal subunit protein bL12 from Halothermothrix orenii (strain H 168 / OCM 544 / DSM 9562).